We begin with the raw amino-acid sequence, 300 residues long: Phospholipase A1 (300 aa).

The cysteines at positions 4 and 87 are disulfide-linked. The active-site Nucleophile is the Ser-137. The active-site Charge relay system is Asp-165. 2 disulfide bridges follow: Cys-176–Cys-181 and Cys-219–Cys-227. His-229 acts as the Charge relay system in catalysis. Disulfide bonds link Cys-244–Cys-268, Cys-245–Cys-293, and Cys-261–Cys-266.

Belongs to the AB hydrolase superfamily. Lipase family. Expressed by the venom gland.

It localises to the secreted. The catalysed reaction is a 1,2-diacyl-sn-glycero-3-phosphocholine + H2O = a 2-acyl-sn-glycero-3-phosphocholine + a fatty acid + H(+). Its function is as follows. Catalyzes the hydrolysis of phosphatidylcholine with phospholipase A1 activity. May act as an allergen and induce hemolytic activity. This is Phospholipase A1 from Vespula maculifrons (Eastern yellow jacket).